A 536-amino-acid polypeptide reads, in one-letter code: Cytochrome P450 78A7 (536 aa).

A helical transmembrane segment spans residues 36–56 (LFLAVVFLSIVTWALAGGGGV). Heme is bound at residue C481.

This sequence belongs to the cytochrome P450 family. It depends on heme as a cofactor.

The protein localises to the membrane. Functionally, functions probably in association with CYP78A5 in regulating relative growth of the shoot apical meristem and plant organs via a non-cell-autonomous signal. This Arabidopsis thaliana (Mouse-ear cress) protein is Cytochrome P450 78A7 (CYP78A7).